We begin with the raw amino-acid sequence, 448 residues long: Probable intron-encoded endonuclease bI1 (448 aa).

Positions 1 to 132 (MRLLKSHPLL…LMMATAFLGY (132 aa)) are cob exon 1 encoded. 3 helical membrane passes run 32-52 (FGSL…TLAM), 86-106 (ASAF…YGSY), and 112-132 (LVWA…FLGY). The tract at residues 133-448 (QHSPKWFDIS…QWIVEDFSDK (316 aa)) is cob intron 1 encoded. The region spanning 230 to 321 (DLSGVYMIIN…LKLLVPNYNI (92 aa)) is the GIY-YIG domain.

It to endonucleases of group I introns of fungi and phage. In terms of processing, the mature protein may arise from proteolytic cleavage of an in-frame translation of cob exon 1 plus intron 1, containing the bI1 open reading frame.

It is found in the mitochondrion inner membrane. Functionally, mitochondrial DNA endonuclease involved in intron homing. This Neurospora crassa (strain ATCC 24698 / 74-OR23-1A / CBS 708.71 / DSM 1257 / FGSC 987) protein is Probable intron-encoded endonuclease bI1 (bI1).